Here is a 620-residue protein sequence, read N- to C-terminus: Sterile alpha motif domain-containing protein 15 (620 aa).

Residues 1–394 form a disordered region; sequence MSEVSGDYNS…PNYPAGKDKL (394 aa). Composition is skewed to basic and acidic residues over residues 62-83, 106-125, and 135-180; these read TRTRKGDLVPVGKNHEVPDLQR, IDPEQKTPDIRSEKLRKSVE, and TKSE…HFKS. A compositionally biased stretch (polar residues) spans 181–191; sequence TEQSGTEQPEQ. The span at 233–242 shows a compositional bias: basic residues; that stretch reads RPLKASKKAQ. Residues 261–270 are compositionally biased toward acidic residues; sequence LLDDQEETQE. 4 stretches are compositionally biased toward basic and acidic residues: residues 271-286, 295-315, 323-337, and 347-382; these read ESIKEKVPEPLGDRKP, KSSERSKLKDTLIEPSKDKDP, FPKEKLIKTTEKTGD, and IQEKSQPEPTEKNLELPNKPKPEEERDLPKEDKPES. The 64-residue stretch at 480–543 folds into the SAM domain; it reads WSPERVAEWI…SYHTRVLLGI (64 aa). A compositionally biased stretch (basic and acidic residues) spans 594 to 604; it reads EIKAEEKKEDA. The tract at residues 594–620 is disordered; it reads EIKAEEKKEDALPENSLEENEELYEAT. The segment covering 609-620 has biased composition (acidic residues); it reads SLEENEELYEAT.

The protein is Sterile alpha motif domain-containing protein 15 (Samd15) of Mus musculus (Mouse).